Here is a 337-residue protein sequence, read N- to C-terminus: Phenylalanine--tRNA ligase alpha subunit (337 aa).

Position 258 (Glu258) interacts with Mg(2+).

The protein belongs to the class-II aminoacyl-tRNA synthetase family. Phe-tRNA synthetase alpha subunit type 1 subfamily. Tetramer of two alpha and two beta subunits. Mg(2+) serves as cofactor.

Its subcellular location is the cytoplasm. The catalysed reaction is tRNA(Phe) + L-phenylalanine + ATP = L-phenylalanyl-tRNA(Phe) + AMP + diphosphate + H(+). This is Phenylalanine--tRNA ligase alpha subunit from Burkholderia cenocepacia (strain ATCC BAA-245 / DSM 16553 / LMG 16656 / NCTC 13227 / J2315 / CF5610) (Burkholderia cepacia (strain J2315)).